The sequence spans 196 residues: Lipoprotein signal peptidase (196 aa).

Helical transmembrane passes span 43 to 63, 75 to 95, and 97 to 117; these read LMLK…GISF, AIFL…MICS, and TIGS…NLID. Catalysis depends on residues Asp126 and Asp144. Residues 135–155 form a helical membrane-spanning segment; the sequence is YSFPVFNLADCFITLGVIILI.

Belongs to the peptidase A8 family.

It localises to the cell inner membrane. The catalysed reaction is Release of signal peptides from bacterial membrane prolipoproteins. Hydrolyzes -Xaa-Yaa-Zaa-|-(S,diacylglyceryl)Cys-, in which Xaa is hydrophobic (preferably Leu), and Yaa (Ala or Ser) and Zaa (Gly or Ala) have small, neutral side chains.. It functions in the pathway protein modification; lipoprotein biosynthesis (signal peptide cleavage). Functionally, this protein specifically catalyzes the removal of signal peptides from prolipoproteins. The protein is Lipoprotein signal peptidase of Rickettsia typhi (strain ATCC VR-144 / Wilmington).